Consider the following 70-residue polypeptide: Putative venom toxin Ts29 (70 aa).

An N-terminal signal peptide occupies residues 1–20 (MSPLFVVLLIATTTFYHSDA).

As to expression, expressed by the venom gland.

The protein resides in the secreted. This Tityus serrulatus (Brazilian scorpion) protein is Putative venom toxin Ts29.